A 440-amino-acid chain; its full sequence is Tol-Pal system protein TolB (440 aa).

The signal sequence occupies residues 1–28; it reads MVMTRRIFFSWFIVICSLWLSSFSSVHA. Positions 417 to 440 are disordered; it reads RNERQLPTPNDASDPAWSPLLNMQ.

The protein belongs to the TolB family. The Tol-Pal system is composed of five core proteins: the inner membrane proteins TolA, TolQ and TolR, the periplasmic protein TolB and the outer membrane protein Pal. They form a network linking the inner and outer membranes and the peptidoglycan layer.

The protein resides in the periplasm. Its function is as follows. Part of the Tol-Pal system, which plays a role in outer membrane invagination during cell division and is important for maintaining outer membrane integrity. The protein is Tol-Pal system protein TolB of Bartonella quintana (strain Toulouse) (Rochalimaea quintana).